A 166-amino-acid polypeptide reads, in one-letter code: Lactose-binding lectin l-2 (166 aa).

A signal peptide spans 1-24; the sequence is MVSFKLPAFLCVAVLSSMALVSHG. 3 disulfide bridges follow: Cys34–Cys45, Cys62–Cys160, and Cys136–Cys152. Residues 41–161 enclose the C-type lectin domain; that stretch reads HKNRCYLHVA…CDLLFPSICV (121 aa).

In terms of assembly, homodimer; disulfide-linked. In terms of tissue distribution, skin; contained within club cells which are a component of the epidermis in combination with epithelial cells and mucus cells (at protein level).

The protein localises to the secreted. Functionally, involved in host defense at the body surface. Causes agglutination and suppresses the growth of the Gram-negative bacterium E.coli K12. Possesses calcium-independent hemagglutinating activity. This chain is Lactose-binding lectin l-2, found in Anguilla japonica (Japanese eel).